The following is a 235-amino-acid chain: Large ribosomal subunit protein uL3 (235 aa).

This sequence belongs to the universal ribosomal protein uL3 family. As to quaternary structure, part of the 50S ribosomal subunit. Forms a cluster with proteins L14 and L19.

In terms of biological role, one of the primary rRNA binding proteins, it binds directly near the 3'-end of the 23S rRNA, where it nucleates assembly of the 50S subunit. The polypeptide is Large ribosomal subunit protein uL3 (Frankia casuarinae (strain DSM 45818 / CECT 9043 / HFP020203 / CcI3)).